A 411-amino-acid polypeptide reads, in one-letter code: Citrate synthase (411 aa).

Active-site residues include H304 and D363.

Belongs to the citrate synthase family.

It carries out the reaction oxaloacetate + acetyl-CoA + H2O = citrate + CoA + H(+). It participates in carbohydrate metabolism; tricarboxylic acid cycle; isocitrate from oxaloacetate: step 1/2. This is Citrate synthase (gltA) from Rickettsia conorii subsp. caspia (strain A-167) (Astrakhan rickettsia).